The chain runs to 92 residues: UPF0235 protein CCA_00247 (92 aa).

This sequence belongs to the UPF0235 family.

The sequence is that of UPF0235 protein CCA_00247 from Chlamydia caviae (strain ATCC VR-813 / DSM 19441 / 03DC25 / GPIC) (Chlamydophila caviae).